We begin with the raw amino-acid sequence, 309 residues long: Pantothenate synthetase (309 aa).

Threonine 2 carries the post-translational modification N-acetylthreonine. An ATP-binding site is contributed by 40–47 (MGALHEGH). The active-site Proton donor is the histidine 47. Glutamine 72 contacts (R)-pantoate. Glutamine 72 contributes to the beta-alanine binding site. Positions 88, 89, and 92 each coordinate Mg(2+). 158 to 161 (GEKD) serves as a coordination point for ATP. Glutamine 164 serves as a coordination point for (R)-pantoate. Residues valine 187 and 195–198 (MSSR) each bind ATP.

Belongs to the pantothenate synthetase family.

The protein localises to the cytoplasm. The catalysed reaction is (R)-pantoate + beta-alanine + ATP = (R)-pantothenate + AMP + diphosphate + H(+). It functions in the pathway cofactor biosynthesis; (R)-pantothenate biosynthesis; (R)-pantothenate from (R)-pantoate and beta-alanine: step 1/1. Its activity is regulated as follows. Pantothenate exhibits uncompetitive inhibition toward both D-pantoate and ATP, and non-competitive inhibition toward beta-alanine. AMPCPP exhibits competitive inhibition toward ATP, uncompetitive inhibition toward beta-alanine, and non-competitive inhibition toward D-pantoate. The enzyme is most active in the presence of magnesium or manganese. Other divalent cations (cobalt, nickel, zinc) are less effective. Catalyzes the condensation of pantoate with beta-alanine in an ATP-dependent reaction via a pantoyl-adenylate intermediate. This chain is Pantothenate synthetase (panC), found in Mycobacterium tuberculosis (strain ATCC 25618 / H37Rv).